We begin with the raw amino-acid sequence, 340 residues long: Complement decay-accelerating factor (340 aa).

4 consecutive Sushi domains span residues 1 to 55, 56 to 119, 120 to 181, and 182 to 244; these read VPNA…FCNR, SCEV…FCKK, KSCP…ECRE, and IYCP…ECRG. An intrachain disulfide couples C24 to C53. A glycan (N-linked (GlcNAc...) asparagine) is linked at N54. 6 disulfides stabilise this stretch: C57/C104, C88/C117, C122/C163, C149/C179, C184/C226, and C212/C242. N107 carries N-linked (GlcNAc...) asparagine glycosylation. The disordered stretch occupies residues 235 to 317; it reads WSGPPPECRG…SGTTSGTTSL (83 aa). Positions 246–268 are enriched in polar residues; sequence SLTSKVPPTVQKPTTVNVPTTEV. 2 stretches are compositionally biased toward low complexity: residues 269 to 287 and 307 to 317; these read SPTS…AQAT and GSGTTSGTTSL. Residue S312 is the site of GPI-anchor amidated serine attachment. The propeptide at 313-340 is removed in mature form; the sequence is GTTSLLSGHKCFTLTGLLGTLVTMGLLT.

This sequence belongs to the receptors of complement activation (RCA) family. As to quaternary structure, monomer (major form) and non-disulfide-linked, covalent homodimer (minor form). Interacts with ADGRE5. Post-translationally, the Ser/Thr-rich domain is heavily O-glycosylated.

The protein resides in the cell membrane. Functionally, this protein recognizes C4b and C3b fragments that condense with cell-surface hydroxyl or amino groups when nascent C4b and C3b are locally generated during C4 and c3 activation. Interaction of daf with cell-associated C4b and C3b polypeptides interferes with their ability to catalyze the conversion of C2 and factor B to enzymatically active C2a and Bb and thereby prevents the formation of C4b2a and C3bBb, the amplification convertases of the complement cascade. Inhibits complement activation by destabilizing and preventing the formation of C3 and C5 convertases, which prevents complement damage. The protein is Complement decay-accelerating factor (CD55) of Pongo pygmaeus (Bornean orangutan).